The sequence spans 136 residues: NADPH-dependent 7-cyano-7-deazaguanine reductase (136 aa).

The active-site Thioimide intermediate is cysteine 50. Aspartate 57 serves as the catalytic Proton donor. Substrate-binding positions include 72-74 (YEL) and 91-92 (HE).

The protein belongs to the GTP cyclohydrolase I family. QueF type 1 subfamily.

The protein localises to the cytoplasm. The enzyme catalyses 7-aminomethyl-7-carbaguanine + 2 NADP(+) = 7-cyano-7-deazaguanine + 2 NADPH + 3 H(+). It participates in tRNA modification; tRNA-queuosine biosynthesis. Its function is as follows. Catalyzes the NADPH-dependent reduction of 7-cyano-7-deazaguanine (preQ0) to 7-aminomethyl-7-deazaguanine (preQ1). The sequence is that of NADPH-dependent 7-cyano-7-deazaguanine reductase from Prochlorococcus marinus (strain MIT 9301).